Here is a 135-residue protein sequence, read N- to C-terminus: Aspartate 1-decarboxylase (135 aa).

The active-site Schiff-base intermediate with substrate; via pyruvic acid is Ser25. A Pyruvic acid (Ser) modification is found at Ser25. Thr57 is a binding site for substrate. The active-site Proton donor is the Tyr58. 73-75 (GAA) lines the substrate pocket.

The protein belongs to the PanD family. Heterooctamer of four alpha and four beta subunits. It depends on pyruvate as a cofactor. In terms of processing, is synthesized initially as an inactive proenzyme, which is activated by self-cleavage at a specific serine bond to produce a beta-subunit with a hydroxyl group at its C-terminus and an alpha-subunit with a pyruvoyl group at its N-terminus.

Its subcellular location is the cytoplasm. It catalyses the reaction L-aspartate + H(+) = beta-alanine + CO2. It participates in cofactor biosynthesis; (R)-pantothenate biosynthesis; beta-alanine from L-aspartate: step 1/1. Its function is as follows. Catalyzes the pyruvoyl-dependent decarboxylation of aspartate to produce beta-alanine. The protein is Aspartate 1-decarboxylase of Mycolicibacterium vanbaalenii (strain DSM 7251 / JCM 13017 / BCRC 16820 / KCTC 9966 / NRRL B-24157 / PYR-1) (Mycobacterium vanbaalenii).